A 253-amino-acid polypeptide reads, in one-letter code: MITKRIIPCLDVDMGRVVKGVNFVNLKDVGDPVEIAEFYNKEGADEIVFLDISATHEGRAIMIDVVRKTAEKLFIPLTVGGGIKNINDFRDILRAGADKISVNSSAIRNPKLIKKAAECFGSQCVVVAIDGKKRKDKDGWNVFINGGRIDTGLDAIEWARKVEKLGAGEILFTSMDADGTKEGYDLELTNEVSEAVNIPVIASGGCGKLKHFGEIFEKSSADAALAASLFHFKELSIKEVKNYLKKEGFSVRL.

Residues aspartate 11 and aspartate 130 contribute to the active site.

Belongs to the HisA/HisF family. Heterodimer of HisH and HisF.

Its subcellular location is the cytoplasm. The catalysed reaction is 5-[(5-phospho-1-deoxy-D-ribulos-1-ylimino)methylamino]-1-(5-phospho-beta-D-ribosyl)imidazole-4-carboxamide + L-glutamine = D-erythro-1-(imidazol-4-yl)glycerol 3-phosphate + 5-amino-1-(5-phospho-beta-D-ribosyl)imidazole-4-carboxamide + L-glutamate + H(+). It participates in amino-acid biosynthesis; L-histidine biosynthesis; L-histidine from 5-phospho-alpha-D-ribose 1-diphosphate: step 5/9. Its function is as follows. IGPS catalyzes the conversion of PRFAR and glutamine to IGP, AICAR and glutamate. The HisF subunit catalyzes the cyclization activity that produces IGP and AICAR from PRFAR using the ammonia provided by the HisH subunit. This is Imidazole glycerol phosphate synthase subunit HisF from Clostridium botulinum (strain Langeland / NCTC 10281 / Type F).